Consider the following 313-residue polypeptide: tRNA dimethylallyltransferase (313 aa).

13-20 (GPTASGKT) is an ATP binding site. A substrate-binding site is contributed by 15–20 (TASGKT). Interaction with substrate tRNA regions lie at residues 38–41 (DSAL), 162–166 (QRLSR), 243–248 (RCVGYR), and 276–283 (KRQITWLR).

This sequence belongs to the IPP transferase family. Monomer. Mg(2+) is required as a cofactor.

It carries out the reaction adenosine(37) in tRNA + dimethylallyl diphosphate = N(6)-dimethylallyladenosine(37) in tRNA + diphosphate. Functionally, catalyzes the transfer of a dimethylallyl group onto the adenine at position 37 in tRNAs that read codons beginning with uridine, leading to the formation of N6-(dimethylallyl)adenosine (i(6)A). The protein is tRNA dimethylallyltransferase of Aliivibrio salmonicida (strain LFI1238) (Vibrio salmonicida (strain LFI1238)).